The chain runs to 307 residues: Transmembrane and coiled-coil domain-containing protein 5B (307 aa).

Residues Phe-17 to Asp-207 are a coiled coil. Residues Tyr-243 to Leu-265 form a helical membrane-spanning segment.

Belongs to the TMCO5 family.

The protein resides in the membrane. This chain is Transmembrane and coiled-coil domain-containing protein 5B (TMCO5B), found in Homo sapiens (Human).